A 660-amino-acid chain; its full sequence is Tripartite terminase subunit 3 (660 aa).

Positions Val-203 to Thr-210 match the Walker A motif motif. The short motif at Ile-294 to Glu-299 is the Walker B motif element. Residue Glu-299 is the For ATPase activity of the active site. Active-site for nuclease activity residues include Asp-452, Glu-523, and Asp-637.

This sequence belongs to the herpesviridae TRM3 protein family. As to quaternary structure, interacts with the terminase subunits TRM1 and TRM2. Interacts with portal protein.

It is found in the host nucleus. Its function is as follows. Component of the molecular motor that translocates viral genomic DNA in empty capsid during DNA packaging. Forms a tripartite terminase complex together with TRM1 and TRM2 in the host cytoplasm. Once the complex reaches the host nucleus, it interacts with the capsid portal vertex. This portal forms a ring in which genomic DNA is translocated into the capsid. TRM3 carries an RNase H-like nuclease activity that plays an important role for the cleavage of concatemeric viral DNA into unit length genomes. The sequence is that of Tripartite terminase subunit 3 from Elephas maximus (Indian elephant).